Reading from the N-terminus, the 300-residue chain is Iodotyrosine deiodinase (300 aa).

The helical transmembrane segment at 15-31 (VGLISVSIAAGVALGQL) threads the bilayer. Residues 110 to 114 (RRSVR), Ser138, and 138 to 139 (SG) each bind FMN. Positions 140, 167, 171, and 192 each coordinate 3,5-diiodo-L-tyrosine. 4 residues coordinate 3-iodo-L-tyrosine: Ala140, Glu167, Tyr171, and Lys192. FMN contacts are provided by residues 247–249 (TTT) and Arg289.

It belongs to the nitroreductase family. Requires FMN as cofactor. May be cleaved at Gln-55. The cleaved form retains catalytic activity.

The protein resides in the membrane. It carries out the reaction 2 iodide + L-tyrosine + 2 NADP(+) = 3,5-diiodo-L-tyrosine + 2 NADPH + H(+). The enzyme catalyses iodide + L-tyrosine + NADP(+) = 3-iodo-L-tyrosine + NADPH. The catalysed reaction is 3-iodo-L-tyrosine + iodide + NADP(+) = 3,5-diiodo-L-tyrosine + NADPH + H(+). It catalyses the reaction L-tyrosine + chloride + NADP(+) = 3-chloro-L-tyrosine + NADPH. It carries out the reaction bromide + L-tyrosine + NADP(+) = 3-bromo-L-tyrosine + NADPH. Catalyzes the dehalogenation of halotyrosines such as 3,5-diiodo-L-tyrosine. Likely to also catalyze the dehalogenation of other halotyrosines such as 3-bromo-L-tyrosine, 3-chloro-L-tyrosine and 3-iodo-L-tyrosine. The chain is Iodotyrosine deiodinase from Daphnia pulex (Water flea).